Reading from the N-terminus, the 165-residue chain is ATP synthase subunit b (165 aa).

A helical transmembrane segment spans residues 7 to 27 (GTSLGNLLIVTGSFILLLLLV).

It belongs to the ATPase B chain family. As to quaternary structure, F-type ATPases have 2 components, F(1) - the catalytic core - and F(0) - the membrane proton channel. F(1) has five subunits: alpha(3), beta(3), gamma(1), delta(1), epsilon(1). F(0) has three main subunits: a(1), b(2) and c(10-14). The alpha and beta chains form an alternating ring which encloses part of the gamma chain. F(1) is attached to F(0) by a central stalk formed by the gamma and epsilon chains, while a peripheral stalk is formed by the delta and b chains.

It localises to the cell membrane. F(1)F(0) ATP synthase produces ATP from ADP in the presence of a proton or sodium gradient. F-type ATPases consist of two structural domains, F(1) containing the extramembraneous catalytic core and F(0) containing the membrane proton channel, linked together by a central stalk and a peripheral stalk. During catalysis, ATP synthesis in the catalytic domain of F(1) is coupled via a rotary mechanism of the central stalk subunits to proton translocation. Functionally, component of the F(0) channel, it forms part of the peripheral stalk, linking F(1) to F(0). The sequence is that of ATP synthase subunit b from Streptococcus mutans serotype c (strain ATCC 700610 / UA159).